The primary structure comprises 571 residues: MRVSKYLLSTQKETPANAEVISHQLMLRAGMIRRNASGLYTWLPSGLRVLRKVEAIVREEMNKTGAIEILMPLVQPADLWVETGRWDKFGPELLRFQDRNNRDFVLGPTHEEVITDLVRKELSSYKQLPLTLYQVQTKFRDEVRPRFGVMRAREFLMKDAYSFHLDQETMDNTYHAMHTAYSNILTRMGLSFRPVLADTGSIGGSMSHEFHVLANSGEDLIAYSTGSDYAANIEKAESPMPTHTLAAPTEAMTLVDTPNAKTIAELVEQFNVVITKTVKTLIVKGATDEVPLVALVIRGDHELNEIKADKLELVASPFEFASETEIRAAVGAGPGSIGPVGLTMPIIVDHSVTVMSDFAAGANAEDKHYFGINWDRDLPLATAADIRNVVEGEPTPDGLGTYAMARGIEVGHIFQLGTSYSKSMNATVLDENGKAQVLLMGCYGVGVSRIVAAAIEQNNDDRGITWPEAIAPFTVGILPMNMHKSHRVADIAEKLYQDLADAGVEVLMDDRKERPGVMFADMELIGLPHVVVIGDRNIDAGVFEYKNRRTGEKQDIPFDEIVAFLTNAAKG.

It belongs to the class-II aminoacyl-tRNA synthetase family. ProS type 1 subfamily. Homodimer.

It localises to the cytoplasm. The catalysed reaction is tRNA(Pro) + L-proline + ATP = L-prolyl-tRNA(Pro) + AMP + diphosphate. Functionally, catalyzes the attachment of proline to tRNA(Pro) in a two-step reaction: proline is first activated by ATP to form Pro-AMP and then transferred to the acceptor end of tRNA(Pro). As ProRS can inadvertently accommodate and process non-cognate amino acids such as alanine and cysteine, to avoid such errors it has two additional distinct editing activities against alanine. One activity is designated as 'pretransfer' editing and involves the tRNA(Pro)-independent hydrolysis of activated Ala-AMP. The other activity is designated 'posttransfer' editing and involves deacylation of mischarged Ala-tRNA(Pro). The misacylated Cys-tRNA(Pro) is not edited by ProRS. The sequence is that of Proline--tRNA ligase from Shewanella frigidimarina (strain NCIMB 400).